The sequence spans 531 residues: Maturase K (531 aa).

Belongs to the intron maturase 2 family. MatK subfamily.

It localises to the plastid. The protein localises to the chloroplast. Functionally, usually encoded in the trnK tRNA gene intron. Probably assists in splicing its own and other chloroplast group II introns. This chain is Maturase K, found in Ephedra sinica (Chinese ephedra).